A 761-amino-acid polypeptide reads, in one-letter code: ARF GTPase-activating protein GIT1 (761 aa).

One can recognise an Arf-GAP domain in the interval 1 to 124; that stretch reads MSRKGPRAEV…AFVHKLPCRD (124 aa). The interval 1 to 124 is interaction with gamma-tubulin and localization to the centrosome; sequence MSRKGPRAEV…AFVHKLPCRD (124 aa). The C4-type zinc finger occupies 11–34; it reads CADCSAPDPGWASISRGVLVCDEC. 3 ANK repeats span residues 132–161, 166–195, and 199–228; these read DLSK…QANF, KGTT…DPGS, and NGRT…ELTD. Residue Tyr224 is modified to Phosphotyrosine. The tract at residues 245-365 is interaction with PCLO; that stretch reads HYIIPQMADS…QGKSLSSPTD (121 aa). Positions 253-415 are interaction with PTK2/FAK1; it reads DSLDLSELAK…NRARSMDSSD (163 aa). The tract at residues 254 to 367 is interaction with ARHGEF7; the sequence is SLDLSELAKA…KSLSSPTDNL (114 aa). The segment at 354–416 is disordered; the sequence is RQQGKSLSSP…RARSMDSSDL (63 aa). Polar residues predominate over residues 357-374; the sequence is GKSLSSPTDNLELSLRSQ. Phosphoserine occurs at positions 359 and 362. The residue at position 364 (Thr364) is a Phosphothreonine. Residues 366 to 587 form an interaction with NCK2 and GRIN3A region; sequence NLELSLRSQS…QEGSRHTSKL (222 aa). Residues 366–587 are required for localization at synapses; sequence NLELSLRSQS…QEGSRHTSKL (222 aa). Ser370 and Ser375 each carry phosphoserine. The residue at position 383 (Tyr383) is a Phosphotyrosine. A phosphoserine mark is found at Ser385 and Ser388. Over residues 385-394 the composition is skewed to acidic residues; that stretch reads SVASDEDTDQ. Thr392 bears the Phosphothreonine mark. A phosphoserine mark is found at Ser410, Ser413, and Ser417. An interaction with MAPK1 region spans residues 411 to 466; it reads MDSSDLSDGAVTLQEYLELKKALATSEAKVQQLMKVNSSLSDELRRLQREIHKLQA. The interval 420 to 620 is interaction with IKBKG; that stretch reads AVTLQEYLEL…EGKRFLELGK (201 aa). A coiled-coil region spans residues 440-474; that stretch reads VQQLMKVNSSLSDELRRLQREIHKLQAENLQLRQP. The segment at 471 to 501 is disordered; it reads LRQPPGPVPTPPLPSERAEHTPMAPGGSTHR. Over residues 474–484 the composition is skewed to pro residues; that stretch reads PPGPVPTPPLP. At Thr480 the chain carries Phosphothreonine. 2 positions are modified to phosphoserine: Ser498 and Ser536. Thr537 is modified (phosphothreonine). A phosphotyrosine mark is found at Tyr545 and Tyr554. A phosphoserine mark is found at Ser561, Ser571, Ser592, and Ser596. The segment at 572–606 is disordered; that stretch reads PLLSCSQEGSRHTSKLSRHGSGADSDYENTQSGDP. The residue at position 601 (Thr601) is a Phosphothreonine. Ser630 is modified (phosphoserine). The segment at 637 to 761 is interaction with PXN and TGFB1I1; it reads PGLPSTEDVI…VTITTREKKQ (125 aa).

As to quaternary structure, forms homodimers and possibly oligomers. May forms heterooligomers with GIT2. Interacts with G protein-coupled receptor kinases, including GRK2, GRK3, GRK5 and GRK6. Interacts with PPFIA1, PPFIA2 and PPFIA4. Interacts with GRIP1 and forms a ternary complex with PPFIA1 and GRIP1. Directly interacts with ARHGEF7/beta-PIX, forming in vitro a heptameric complex made of a GIT1 dimer and an ARHGEF7 trimer. Directly interacts with PXN/paxillin; this interaction is enhanced in the presence of ARHGEF7. Directly interacts (via C-terminus) with TGFB1I1/Hic-5 (via LD motif 3). Directly interacts with PTK2/FAK1. May interact with PTK2B/PYK2; this interaction may be indirect. Interacts with AMPA receptors GRIA2/3. Directly interacts with protein Piccolo/PCLO. Forms a complex with Ephrin-B1/EFNB1 and NCK2/GRB4 (via SH2); this interaction is important for spine morphogenesis and synapse formation. Interaction with NCK2 is transient and depends upon GIT1 phosphorylation at Tyr-383. Interacts with GRIN3A/GluN3A (via C-terminus); this interaction competes with GIT1 interaction with ARHGEF7 and limits synaptic localization of GIT1. Interacts with IKBKG/NEMO in resting bone mesenchymal stem cells, as well as in TNF-stimulated cells; this interaction may increase IKBKG affinity for 'Lys-63'-linked polyubiquitin chains. Interacts with GABA(A) receptors, including GABRB3 and GABRG2. Interacts with SCRIB. Interacts (via N- and C-terminus) with ENTR1/SDCCAG3 (via N-terminus); this interaction is direct. May form a tripartite complex with ENTR1 and PTPN13. Interacts with YWHAZ. Interacts with PAK1. Interacts with PAK3. Directly interacts (via N-terminus) with gamma-tubulin. Interacts with MAPK1 and MAPK3; this interaction is required for MAPK1/3 recruitment to focal adhesions. In terms of processing, phosphorylated by PAK1. Phosphorylation on tyrosine residues may be catalyzed by PTK2/FAK1 and SRC in growing fibroblasts. Phosphorylation at Tyr-383 is induced by activation of Ephrin-B1/EFNB1 and catalyzed by SRC family kinases. It is required for the interaction with NCK2 and for GIT1 recruitment to synapses in hippocampal neurons.

Its subcellular location is the cytoplasm. The protein resides in the synapse. The protein localises to the presynapse. It is found in the postsynapse. It localises to the postsynaptic density. Its subcellular location is the cell junction. The protein resides in the focal adhesion. The protein localises to the cell projection. It is found in the lamellipodium. It localises to the cytoskeleton. Its subcellular location is the microtubule organizing center. The protein resides in the centrosome. The protein localises to the spindle pole. Its function is as follows. GTPase-activating protein for ADP ribosylation factor family members, including ARF1. Multidomain scaffold protein that interacts with numerous proteins and therefore participates in many cellular functions, including receptor internalization, focal adhesion remodeling, and signaling by both G protein-coupled receptors and tyrosine kinase receptors. Through PAK1 activation, positively regulates microtubule nucleation during interphase. Plays a role in the regulation of cytokinesis; for this function, may act in a pathway also involving ENTR1 and PTPN13. May promote cell motility both by regulating focal complex dynamics and by local activation of RAC1. May act as scaffold for MAPK1/3 signal transduction in focal adhesions. Recruits MAPK1/3/ERK1/2 to focal adhesions after EGF stimulation via a Src-dependent pathway, hence stimulating cell migration. Plays a role in brain development and function. Involved in the regulation of spine density and synaptic plasticity that is required for processes involved in learning. Plays an important role in dendritic spine morphogenesis and synapse formation. In hippocampal neurons, recruits guanine nucleotide exchange factors (GEFs), such as ARHGEF7/beta-PIX, to the synaptic membrane. These in turn locally activate RAC1, which is an essential step for spine morphogenesis and synapse formation. May contribute to the organization of presynaptic active zones through oligomerization and formation of a Piccolo/PCLO-based protein network, which includes ARHGEF7/beta-PIX and FAK1. In neurons, through its interaction with liprin-alpha family members, may be required for AMPA receptor (GRIA2/3) proper targeting to the cell membrane. In complex with GABA(A) receptors and ARHGEF7, plays a crucial role in regulating GABA(A) receptor synaptic stability, maintaining GPHN/gephyrin scaffolds and hence GABAergic inhibitory synaptic transmission, by locally coordinating RAC1 and PAK1 downstream effector activity, leading to F-actin stabilization. May also be important for RAC1 downstream signaling pathway through PAK3 and regulation of neuronal inhibitory transmission at presynaptic input. Required for successful bone regeneration during fracture healing. The function in intramembranous ossification may, at least partly, exerted by macrophages in which GIT1 is a key negative regulator of redox homeostasis, IL1B production, and glycolysis, acting through the ERK1/2/NRF2/NFE2L2 axis. May play a role in angiogenesis during fracture healing. In this process, may regulate activation of the canonical NF-kappa-B signal in bone mesenchymal stem cells by enhancing the interaction between NEMO and 'Lys-63'-ubiquitinated RIPK1/RIP1, eventually leading to enhanced production of VEGFA and others angiogenic factors. Essential for VEGF signaling through the activation of phospholipase C-gamma and ERK1/2, hence may control endothelial cell proliferation and angiogenesis. The protein is ARF GTPase-activating protein GIT1 (GIT1) of Homo sapiens (Human).